The chain runs to 35 residues: Photosystem II reaction center protein T (35 aa).

The helical transmembrane segment at 3-23 (ALVYTFLLVSTLGIIFFAIFF) threads the bilayer.

The protein belongs to the PsbT family. PSII is composed of 1 copy each of membrane proteins PsbA, PsbB, PsbC, PsbD, PsbE, PsbF, PsbH, PsbI, PsbJ, PsbK, PsbL, PsbM, PsbT, PsbY, PsbZ, Psb30/Ycf12, at least 3 peripheral proteins of the oxygen-evolving complex and a large number of cofactors. It forms dimeric complexes.

Its subcellular location is the plastid. It is found in the chloroplast thylakoid membrane. Its function is as follows. Found at the monomer-monomer interface of the photosystem II (PS II) dimer, plays a role in assembly and dimerization of PSII. PSII is a light-driven water plastoquinone oxidoreductase, using light energy to abstract electrons from H(2)O, generating a proton gradient subsequently used for ATP formation. This is Photosystem II reaction center protein T from Bassia hyssopifolia (Fivehorn smotherweed).